A 79-amino-acid polypeptide reads, in one-letter code: Crassicorin-I (79 aa).

Residues 1–19 (MKLFLVSIVLVGMLVLAAA) form the signal peptide. A propeptide spanning residues 20–39 (RPERDIDSFDEQEEKGFVKR) is cleaved from the precursor. Cystine bridges form between C43-C76, C45-C69, and C59-C77.

This sequence belongs to the sea anemone type 3 (BDS) potassium channel toxin family. In terms of tissue distribution, highly expressed by the mesenteries. Moderately expressed by the pharynx. Weakly expressed by the gonad and pedal disk. No expression in tentacle.

Its subcellular location is the secreted. It is found in the nematocyst. Functionally, peptide with both antimicrobial and neurotoxin activities. Cationic AMP with antibacterial activity against both Gram-positive bacteria (B.subtilis, MIC=11.49 ug/mL) and Gram-negative bacteria (E.coli (MIC=12.21 ug/mL) and S.enterica (MIC=11.95 ug/mL)). Shows no significant antimicrobial activity against bacteria S.aureus and P.aeruginosa, as well as the fungus C.albicans. In vivo, induces reversible paralytic activity towards the shrimp P.paucidens. May act by impairing sodium or potassium channels in the prey. The chain is Crassicorin-I from Urticina crassicornis (Mottled anemone).